Here is a 354-residue protein sequence, read N- to C-terminus: Rhodopsin (354 aa).

Residues 1-36 (MNGTEGPNFYVPFSNKSGVVRSPFEYPQYYLAEPWQ) lie on the Extracellular side of the membrane. 2 N-linked (GlcNAc...) asparagine glycosylation sites follow: Asn-2 and Asn-15. The helical transmembrane segment at 37-61 (YSVLAAYMFLLILLGFPVNFLTLYV) threads the bilayer. The Cytoplasmic segment spans residues 62 to 73 (TIQHKKLRTPLN). Residues 74 to 96 (YILLNLAFANHFMVFGGFPVTMY) traverse the membrane as a helical segment. Topologically, residues 97–110 (SSMHGYFVFGQTGC) are extracellular. Cysteines 110 and 187 form a disulfide. The chain crosses the membrane as a helical span at residues 111 to 133 (YIEGFFATMGGEIALWSLVVLAI). Residues 134–136 (ERY) carry the 'Ionic lock' involved in activated form stabilization motif. Over 134–152 (ERYVVVCKPMSNFRFGENH) the chain is Cytoplasmic. Residues 153-173 (AIMGVMMTWIMALACAAPPLF) form a helical membrane-spanning segment. At 174-202 (GWSRYIPEGMQCSCGVDYYTLKPEVNNES) the chain is on the extracellular side. A helical membrane pass occupies residues 203–224 (FVIYMFLVHFTIPLMIIFFCYG). At 225–252 (RLVCTVKEAAAQQQESATTQKAEKEVTR) the chain is on the cytoplasmic side. Residues 253–274 (MVIIMVVAFLICWVPYASVAFY) form a helical membrane-spanning segment. Residues 275–286 (IFSNQGTDFGPI) are Extracellular-facing. The chain crosses the membrane as a helical span at residues 287 to 308 (FMTVPAFFAKSSAIYNPVIYIV). Position 296 is an N6-(retinylidene)lysine (Lys-296). Topologically, residues 309-354 (LNKQFRNCMITTICCGKNPFGDDETTSAATSKTEASSVSSSQVSPA) are cytoplasmic. Residues Cys-322 and Cys-323 are each lipidated (S-palmitoyl cysteine). A disordered region spans residues 332–354 (ETTSAATSKTEASSVSSSQVSPA). The segment covering 334 to 354 (TSAATSKTEASSVSSSQVSPA) has biased composition (low complexity).

The protein belongs to the G-protein coupled receptor 1 family. Opsin subfamily. Post-translationally, contains one covalently linked retinal chromophore. Upon light absorption, the covalently bound 11-cis-retinal is converted to all-trans-retinal. After hydrolysis of the Schiff base and release of the covalently bound all-trans-retinal, active rhodopsin is regenerated by binding of a fresh molecule of 11-cis-retinal.

Its subcellular location is the membrane. It is found in the cell projection. The protein resides in the cilium. It localises to the photoreceptor outer segment. Functionally, photoreceptor required for image-forming vision at low light intensity. Required for photoreceptor cell viability after birth. Light-induced isomerization of 11-cis to all-trans retinal triggers a conformational change that activates signaling via G-proteins. Subsequent receptor phosphorylation mediates displacement of the bound G-protein alpha subunit by arrestin and terminates signaling. The sequence is that of Rhodopsin (RHO) from Ambystoma tigrinum (Eastern tiger salamander).